The primary structure comprises 150 residues: Deoxyuridine 5'-triphosphate nucleotidohydrolase (150 aa).

Substrate contacts are provided by residues 69–71 (RSG), Asn82, 86–88 (LID), and Lys96.

It belongs to the dUTPase family. Mg(2+) is required as a cofactor.

It catalyses the reaction dUTP + H2O = dUMP + diphosphate + H(+). It functions in the pathway pyrimidine metabolism; dUMP biosynthesis; dUMP from dCTP (dUTP route): step 2/2. Its function is as follows. This enzyme is involved in nucleotide metabolism: it produces dUMP, the immediate precursor of thymidine nucleotides and it decreases the intracellular concentration of dUTP so that uracil cannot be incorporated into DNA. The polypeptide is Deoxyuridine 5'-triphosphate nucleotidohydrolase (Neisseria meningitidis serogroup A / serotype 4A (strain DSM 15465 / Z2491)).